The primary structure comprises 420 residues: Glutamyl-tRNA reductase (420 aa).

Substrate-binding positions include 49-52 (TCNR), serine 109, 114-116 (EPQ), and glutamine 120. Cysteine 50 acts as the Nucleophile in catalysis. An NADP(+)-binding site is contributed by 189–194 (GAGETI).

The protein belongs to the glutamyl-tRNA reductase family. Homodimer.

It catalyses the reaction (S)-4-amino-5-oxopentanoate + tRNA(Glu) + NADP(+) = L-glutamyl-tRNA(Glu) + NADPH + H(+). It participates in porphyrin-containing compound metabolism; protoporphyrin-IX biosynthesis; 5-aminolevulinate from L-glutamyl-tRNA(Glu): step 1/2. Functionally, catalyzes the NADPH-dependent reduction of glutamyl-tRNA(Glu) to glutamate 1-semialdehyde (GSA). This chain is Glutamyl-tRNA reductase, found in Sodalis glossinidius (strain morsitans).